Here is a 403-residue protein sequence, read N- to C-terminus: Probable tubulin--tyrosine ligase C12B10.04 (403 aa).

The TTL domain occupies 9 to 386 (KVYVNYRDEY…PFFESSTKRN (378 aa)).

This sequence belongs to the tubulin--tyrosine ligase family. The cofactor is Mg(2+). K(+) is required as a cofactor.

It localises to the cytoplasm. Its subcellular location is the nucleus. The enzyme catalyses C-terminal L-alpha-aminoacyl-L-glutamyl-L-glutamyl-[tubulin] + L-tyrosine + ATP = C-terminal L-alpha-aminoacyl-L-glutamyl-L-glutamyl-L-tyrosyl-[tubulin] + ADP + phosphate + H(+). In terms of biological role, probable tubulin--tyrosine ligase. This Schizosaccharomyces pombe (strain 972 / ATCC 24843) (Fission yeast) protein is Probable tubulin--tyrosine ligase C12B10.04.